Here is a 190-residue protein sequence, read N- to C-terminus: CASP-like protein 1E1 (190 aa).

The disordered stretch occupies residues 1-21 (MEHESKTKMDGIEMEKGKKEN). Residues 1-28 (MEHESKTKMDGIEMEKGKKENGSRKGVE) are Cytoplasmic-facing. Residues 29 to 49 (ITMRVLALVLTMVAATVLGVA) traverse the membrane as a helical segment. The Extracellular portion of the chain corresponds to 50–83 (KQTEVVPIKLIPTLPPLNVATTAKASYLSAFVYN). The chain crosses the membrane as a helical span at residues 84–104 (ICANAIACGYTAISIMIVIIS). Topologically, residues 105–111 (KGRRSKC) are cytoplasmic. Residues 112–132 (LLMAVLIGDLMMVALLCSSTG) traverse the membrane as a helical segment. The Extracellular segment spans residues 133–163 (AAGAIGLMGRHGNKHVMWKKVCGVFGKFCNQ). The helical transmembrane segment at 164 to 184 (AAVSVAITLIASVVFMLLVVL) threads the bilayer. At 185-190 (DALKLP) the chain is on the cytoplasmic side.

Belongs to the Casparian strip membrane proteins (CASP) family. In terms of assembly, homodimer and heterodimers.

The protein resides in the cell membrane. This Arabidopsis lyrata subsp. lyrata (Lyre-leaved rock-cress) protein is CASP-like protein 1E1.